The sequence spans 720 residues: MELRKDKLLMFYSEGKESKEAKWAVNDPMSKSYKLSLPSALRPDNLLPGNRLRYTDASKSKSSKVSWYKTILDPGSEIVLKWNWVFIVSCMVALFIDPLYFFVPAIGGDKNYPCARTDTSLSILVTFFRTIADLFYLLHIFIKFRTGFIAPNSSTRVFGRGELVMDPKAIAWRYIKSDFIIDLIATLPLPQIVIWFVISTTKSYRFDHNNNAIALIVLLQYIPRFYLIIPLSSQIVKATGVVTKTAWAGAAYNLLLYMLASHVLGAAWYILSVDRYTSCWKSRCNGEAGQVNCQLYYLDCDSMYDNNQMTWANVTKVFKLCDARNGEFKYGIFGNAITKNVVSSQFFERYFYCLWWGLQQLSSYGQNLSTTMFMGETTFAVLIAIFGLVLFAHLIGNMQTYLQSLTVRLEEWRLKKRDTEEWMRHRQLPEELRNRVRRYEQYKWLATRGVDEEVLLQSLPTDLRRDIQRHLCLDLVRRVPFFSQMDDQLLDAICERLVSSLCTEGTYLVREGDLISEMLFIIRGRLESSTTNGGRTGFFNSIILRPGDFCGEELLSWALLPKSTLNLPSSTRTVRALVEVEAFALRAEDLKFVANQFRRLHSKKLQHTFRFYSHHWRTWAACFIQAAWRRYKRRVMENNLTAIESMENEEGEVGEELVVVEEEECVEESPRTKMNLGVMVLASRFAANTRRGVAAQRVKDVELPRFKKPEEPDFSAEHDD.

The Cytoplasmic segment spans residues 1 to 85 (MELRKDKLLM…SEIVLKWNWV (85 aa)). A helical transmembrane segment spans residues 86 to 106 (FIVSCMVALFIDPLYFFVPAI). Residues 107-121 (GGDKNYPCARTDTSL) lie on the Extracellular side of the membrane. A helical transmembrane segment spans residues 122-142 (SILVTFFRTIADLFYLLHIFI). Residues 143-178 (KFRTGFIAPNSSTRVFGRGELVMDPKAIAWRYIKSD) are Cytoplasmic-facing. A helical membrane pass occupies residues 179–199 (FIIDLIATLPLPQIVIWFVIS). The Extracellular segment spans residues 200–211 (TTKSYRFDHNNN). The chain crosses the membrane as a helical span at residues 212–232 (AIALIVLLQYIPRFYLIIPLS). The Cytoplasmic segment spans residues 233 to 252 (SQIVKATGVVTKTAWAGAAY). A helical membrane pass occupies residues 253–273 (NLLLYMLASHVLGAAWYILSV). Residues 274–377 (DRYTSCWKSR…LSTTMFMGET (104 aa)) lie on the Extracellular side of the membrane. Residues 378-398 (TFAVLIAIFGLVLFAHLIGNM) form a helical membrane-spanning segment. Topologically, residues 399–720 (QTYLQSLTVR…EPDFSAEHDD (322 aa)) are cytoplasmic. Residues 481–605 (FFSQ…SKKL) and Glu-552 each bind a nucleoside 3',5'-cyclic phosphate. Positions 597–612 (FRRLHSKKLQHTFRFY) are calmodulin-binding. Residues 617–646 (RTWAACFIQAAWRRYKRRVMENNLTAIESM) enclose the IQ domain.

Belongs to the cyclic nucleotide-gated cation channel (TC 1.A.1.5) family. As to quaternary structure, homotetramer or heterotetramer. Part of a functional complex containing PSKR1, BAK1, CNGC17, and AHA. Interacts with AHA1, AHA2, and BAK1, but not with PSKR1 or BRI1.

Its subcellular location is the cell membrane. Functionally, probable cyclic nucleotide-gated ion channel. Forms a functional cation-translocating unit with AHAs that is activated by PSKR1/BAK1 and possibly other BAK1/RLK complexes. Required for PSK-induced protoplast expansion. The chain is Cyclic nucleotide-gated ion channel 17 from Arabidopsis thaliana (Mouse-ear cress).